The primary structure comprises 205 residues: Pre-rRNA-processing protein TSR2 (205 aa).

Residues 144–205 form a disordered region; that stretch reads SKRVVHIEGD…LVQPKGRRKH (62 aa). Acidic residues predominate over residues 152-177; sequence GDDDEDDEDVEDYDDEDEDEEMDEVV.

The protein belongs to the TSR2 family. As to quaternary structure, interacts with RPS26A.

It localises to the cytoplasm. The protein localises to the nucleus. In terms of biological role, required for 20S pre-rRNA processing. The polypeptide is Pre-rRNA-processing protein TSR2 (Saccharomyces cerevisiae (strain ATCC 204508 / S288c) (Baker's yeast)).